The primary structure comprises 74 residues: ATP synthase subunit 9, mitochondrial (74 aa).

Transmembrane regions (helical) follow at residues 12–32 (LATIGLAGAGVGVGLVFAALI) and 50–70 (ILGFALTEAIGLFALMMAFLL).

Belongs to the ATPase C chain family. In terms of assembly, F-type ATPases have 2 components, CF(1) - the catalytic core - and CF(0) - the membrane proton channel. CF(1) has five subunits: alpha(3), beta(3), gamma(1), delta(1), epsilon(1). CF(0) has three main subunits: a, b and c.

The protein resides in the mitochondrion membrane. Its function is as follows. Mitochondrial membrane ATP synthase (F(1)F(0) ATP synthase or Complex V) produces ATP from ADP in the presence of a proton gradient across the membrane which is generated by electron transport complexes of the respiratory chain. F-type ATPases consist of two structural domains, F(1) - containing the extramembraneous catalytic core and F(0) - containing the membrane proton channel, linked together by a central stalk and a peripheral stalk. During catalysis, ATP synthesis in the catalytic domain of F(1) is coupled via a rotary mechanism of the central stalk subunits to proton translocation. Part of the complex F(0) domain. A homomeric c-ring of probably 10 subunits is part of the complex rotary element. The chain is ATP synthase subunit 9, mitochondrial from Rhizopus oryzae (Mucormycosis agent).